We begin with the raw amino-acid sequence, 417 residues long: Gamma-glutamyl phosphate reductase (417 aa).

It belongs to the gamma-glutamyl phosphate reductase family.

It localises to the cytoplasm. It carries out the reaction L-glutamate 5-semialdehyde + phosphate + NADP(+) = L-glutamyl 5-phosphate + NADPH + H(+). It participates in amino-acid biosynthesis; L-proline biosynthesis; L-glutamate 5-semialdehyde from L-glutamate: step 2/2. Catalyzes the NADPH-dependent reduction of L-glutamate 5-phosphate into L-glutamate 5-semialdehyde and phosphate. The product spontaneously undergoes cyclization to form 1-pyrroline-5-carboxylate. This Escherichia coli O81 (strain ED1a) protein is Gamma-glutamyl phosphate reductase.